The primary structure comprises 293 residues: Glutamyl-Q tRNA(Asp) synthetase (293 aa).

L-glutamate contacts are provided by residues 4–8 (RYAPS) and Glu-40. The short motif at 7 to 17 (PSPSGDLHFGN) is the 'HIGH' region element. Residues Cys-92, Cys-94, Tyr-113, and Cys-117 each contribute to the Zn(2+) site. The L-glutamate site is built by Tyr-180 and Arg-198. The 'KMSKS' region motif lies at 236–240 (RLAKR). An ATP-binding site is contributed by Lys-239.

The protein belongs to the class-I aminoacyl-tRNA synthetase family. GluQ subfamily. Requires Zn(2+) as cofactor.

Catalyzes the tRNA-independent activation of glutamate in presence of ATP and the subsequent transfer of glutamate onto a tRNA(Asp). Glutamate is transferred on the 2-amino-5-(4,5-dihydroxy-2-cyclopenten-1-yl) moiety of the queuosine in the wobble position of the QUC anticodon. This Corynebacterium glutamicum (strain ATCC 13032 / DSM 20300 / JCM 1318 / BCRC 11384 / CCUG 27702 / LMG 3730 / NBRC 12168 / NCIMB 10025 / NRRL B-2784 / 534) protein is Glutamyl-Q tRNA(Asp) synthetase.